The primary structure comprises 193 residues: V-type sodium ATPase subunit E (193 aa).

This sequence belongs to the V-ATPase E subunit family. The N-terminus is blocked.

Its function is as follows. Involved in ATP-driven sodium extrusion. This chain is V-type sodium ATPase subunit E (ntpE), found in Enterococcus hirae (strain ATCC 9790 / DSM 20160 / JCM 8729 / LMG 6399 / NBRC 3181 / NCIMB 6459 / NCDO 1258 / NCTC 12367 / WDCM 00089 / R).